A 181-amino-acid chain; its full sequence is Protein Ves (181 aa).

This sequence belongs to the Ves family.

The protein is Protein Ves of Cronobacter sakazakii (strain ATCC BAA-894) (Enterobacter sakazakii).